Here is a 421-residue protein sequence, read N- to C-terminus: Acetate kinase (421 aa).

Mg(2+) is bound at residue Asn7. Lys14 provides a ligand contact to ATP. Residue Arg91 coordinates substrate. Asp148 serves as the catalytic Proton donor/acceptor. ATP is bound by residues 208-212 (HIGNG) and 283-285 (DRR). A Mg(2+)-binding site is contributed by Glu387.

This sequence belongs to the acetokinase family. In terms of assembly, homodimer. Requires Mg(2+) as cofactor. Mn(2+) is required as a cofactor.

It localises to the cytoplasm. The enzyme catalyses acetate + ATP = acetyl phosphate + ADP. The protein operates within metabolic intermediate biosynthesis; acetyl-CoA biosynthesis; acetyl-CoA from acetate: step 1/2. Its function is as follows. Catalyzes the formation of acetyl phosphate from acetate and ATP. Can also catalyze the reverse reaction. This is Acetate kinase from Trichlorobacter lovleyi (strain ATCC BAA-1151 / DSM 17278 / SZ) (Geobacter lovleyi).